The chain runs to 537 residues: Chaperonin GroEL 2 (537 aa).

ATP contacts are provided by residues 29–32, 86–90, Gly-412, and Asp-495; these read TLGP and DGTTT.

The protein belongs to the chaperonin (HSP60) family. Forms a cylinder of 14 subunits composed of two heptameric rings stacked back-to-back. Interacts with the co-chaperonin GroES.

It is found in the cytoplasm. It carries out the reaction ATP + H2O + a folded polypeptide = ADP + phosphate + an unfolded polypeptide.. Its function is as follows. Together with its co-chaperonin GroES, plays an essential role in assisting protein folding. The GroEL-GroES system forms a nano-cage that allows encapsulation of the non-native substrate proteins and provides a physical environment optimized to promote and accelerate protein folding. The protein is Chaperonin GroEL 2 of Paenarthrobacter aurescens (strain TC1).